The following is a 601-amino-acid chain: Elongation factor 4 (601 aa).

The region spanning 4–186 is the tr-type G domain; that stretch reads SFIRNFAIIA…SIVHLVPPPK (183 aa). GTP contacts are provided by residues 16–21 and 133–136; these read DHGKST and NKID.

This sequence belongs to the TRAFAC class translation factor GTPase superfamily. Classic translation factor GTPase family. LepA subfamily.

It is found in the cell inner membrane. The catalysed reaction is GTP + H2O = GDP + phosphate + H(+). Functionally, required for accurate and efficient protein synthesis under certain stress conditions. May act as a fidelity factor of the translation reaction, by catalyzing a one-codon backward translocation of tRNAs on improperly translocated ribosomes. Back-translocation proceeds from a post-translocation (POST) complex to a pre-translocation (PRE) complex, thus giving elongation factor G a second chance to translocate the tRNAs correctly. Binds to ribosomes in a GTP-dependent manner. In Koribacter versatilis (strain Ellin345), this protein is Elongation factor 4.